A 94-amino-acid chain; its full sequence is Co-chaperonin GroES (94 aa).

Belongs to the GroES chaperonin family. As to quaternary structure, heptamer of 7 subunits arranged in a ring. Interacts with the chaperonin GroEL.

The protein localises to the cytoplasm. In terms of biological role, together with the chaperonin GroEL, plays an essential role in assisting protein folding. The GroEL-GroES system forms a nano-cage that allows encapsulation of the non-native substrate proteins and provides a physical environment optimized to promote and accelerate protein folding. GroES binds to the apical surface of the GroEL ring, thereby capping the opening of the GroEL channel. The polypeptide is Co-chaperonin GroES (Bacillus licheniformis (strain ATCC 14580 / DSM 13 / JCM 2505 / CCUG 7422 / NBRC 12200 / NCIMB 9375 / NCTC 10341 / NRRL NRS-1264 / Gibson 46)).